Here is a 383-residue protein sequence, read N- to C-terminus: Sulfate adenylyltransferase (383 aa).

The protein belongs to the sulfate adenylyltransferase family.

It carries out the reaction sulfate + ATP + H(+) = adenosine 5'-phosphosulfate + diphosphate. Its pathway is sulfur metabolism; hydrogen sulfide biosynthesis; sulfite from sulfate: step 1/3. The protein is Sulfate adenylyltransferase of Halothermothrix orenii (strain H 168 / OCM 544 / DSM 9562).